Reading from the N-terminus, the 53-residue chain is Large ribosomal subunit protein bL33A (53 aa).

The protein belongs to the bacterial ribosomal protein bL33 family.

The polypeptide is Large ribosomal subunit protein bL33A (rpmG1) (Mycoplasma pneumoniae (strain ATCC 29342 / M129 / Subtype 1) (Mycoplasmoides pneumoniae)).